The chain runs to 293 residues: Movement protein BC1 (293 aa).

The protein belongs to the begomovirus movement protein BC1 family. In terms of assembly, binds to dimeric supercoiled plasmid DNA. Post-translationally, phosphorylated.

It is found in the host cell membrane. Its subcellular location is the host microsome membrane. The protein localises to the host endoplasmic reticulum membrane. Functionally, transports viral genome to neighboring plant cells directly through plasmosdesmata, without any budding. The movement protein allows efficient cell to cell propagation, by bypassing the host cell wall barrier. Begomovirus genome is shuttled out of nucleus by Nuclear shuttle protein (NSP) and the movement protein transports the DNA-NSP complex to cell plasmodesmata and facilitates further movement across the cell wall. This Macroptilium lathyroides (Lima bean) protein is Movement protein BC1.